Reading from the N-terminus, the 116-residue chain is Large ribosomal subunit protein bL20 (116 aa).

This sequence belongs to the bacterial ribosomal protein bL20 family.

Functionally, binds directly to 23S ribosomal RNA and is necessary for the in vitro assembly process of the 50S ribosomal subunit. It is not involved in the protein synthesizing functions of that subunit. This Helicobacter pylori (strain P12) protein is Large ribosomal subunit protein bL20.